Reading from the N-terminus, the 581-residue chain is Interleukin-22 receptor subunit alpha-1 (581 aa).

Positions 1–15 (MKTLLTILTVGSLAA) are cleaved as a signal peptide. The Extracellular portion of the chain corresponds to 16-230 (HTTVDTSGLL…TLPDRTWAYS (215 aa)). 2 Fibronectin type-III domains span residues 18–115 (TVDT…RFSS) and 141–221 (PTLT…RVKT). Cys-71 and Cys-79 are oxidised to a cystine. N-linked (GlcNAc...) asparagine glycans are attached at residues Asn-80 and Asn-172. Residues Cys-128 and Cys-217 are joined by a disulfide bond. Residues 231–251 (FSGAVLFSMGFLVGLLCYLGY) form a helical membrane-spanning segment. Over 252 to 581 (KYITKPPVPP…GLALTVQWES (330 aa)) the chain is Cytoplasmic. Residues 343–364 (QQTLSPPSYAPKAVPEVQPPSY) form a disordered region. 2 positions are modified to phosphoserine; by GSK3-beta: Ser-410 and Ser-414. A Glycyl lysine isopeptide (Lys-Gly) (interchain with G-Cter in ubiquitin) cross-link involves residue Lys-449.

This sequence belongs to the type II cytokine receptor family. Heterodimer with IL10RB and with IL20RB. In terms of processing, phosphorylated by GSK3-BETA and MAPK; phosphorylation by GSK3-BETA stabilizes IL22RA1 by preventing its proteasomal degradation. Expressed in kidney, liver and lung.

The protein resides in the cell membrane. In terms of biological role, component of the receptor for IL20, IL22 and IL24. Component of IL22 receptor formed by IL22RA1 and IL10RB enabling IL22 signaling via JAK/STAT pathways. IL22 also induces activation of MAPK1/MAPK3 and Akt kinases pathways. Component of one of the receptor for IL20 and IL24 formed by IL22RA1 and IL20RB also signaling through STATs activation. Mediates IL24 antiangiogenic activity as well as IL24 inhibitory effect on endothelial cell tube formation and differentiation. This chain is Interleukin-22 receptor subunit alpha-1 (Il22ra1), found in Mus musculus (Mouse).